We begin with the raw amino-acid sequence, 95 residues long: Co-chaperonin GroES (95 aa).

This sequence belongs to the GroES chaperonin family. In terms of assembly, heptamer of 7 subunits arranged in a ring. Interacts with the chaperonin GroEL.

The protein localises to the cytoplasm. Functionally, together with the chaperonin GroEL, plays an essential role in assisting protein folding. The GroEL-GroES system forms a nano-cage that allows encapsulation of the non-native substrate proteins and provides a physical environment optimized to promote and accelerate protein folding. GroES binds to the apical surface of the GroEL ring, thereby capping the opening of the GroEL channel. This chain is Co-chaperonin GroES, found in Dichelobacter nodosus (strain VCS1703A).